Reading from the N-terminus, the 230-residue chain is Orotidine 5'-phosphate decarboxylase (230 aa).

Residues aspartate 10, lysine 32, 59–68 (DLKYHDIPNT), threonine 119, arginine 180, glutamine 189, glycine 209, and arginine 210 each bind substrate. The active-site Proton donor is lysine 61.

It belongs to the OMP decarboxylase family. Type 1 subfamily. Homodimer.

It carries out the reaction orotidine 5'-phosphate + H(+) = UMP + CO2. It participates in pyrimidine metabolism; UMP biosynthesis via de novo pathway; UMP from orotate: step 2/2. Its function is as follows. Catalyzes the decarboxylation of orotidine 5'-monophosphate (OMP) to uridine 5'-monophosphate (UMP). The chain is Orotidine 5'-phosphate decarboxylase from Actinobacillus pleuropneumoniae serotype 5b (strain L20).